Consider the following 422-residue polypeptide: Autophagy-related protein 21 (422 aa).

WD repeat units follow at residues Met-1–Glu-35, Ser-102–Gln-153, Met-166–Val-206, Val-228–Leu-268, Asn-280–Ser-319, and Lys-374–Val-414. The short motif at Phe-276–Asn-280 is the L/FRRG motif element.

Belongs to the WD repeat PROPPIN family.

It is found in the cytoplasm. It localises to the membrane. The protein resides in the vacuole membrane. In terms of biological role, required for cytoplasm to vacuole transport (Cvt) vesicles formation and mitophagy. Involved in binding of phosphatidylethanolamine to ATG8 and in recruitment of ATG8 and ATG5 to the pre-autophagosomal structure. Protects ATG8 from ARG4-mediated cleavage. The sequence is that of Autophagy-related protein 21 (ATG21) from Vanderwaltozyma polyspora (strain ATCC 22028 / DSM 70294 / BCRC 21397 / CBS 2163 / NBRC 10782 / NRRL Y-8283 / UCD 57-17) (Kluyveromyces polysporus).